We begin with the raw amino-acid sequence, 432 residues long: MQVSVETTQGLGRRVTITIAADSIETAVKSELVNVAKKVRIDGFRKGKVPMNIVAQRYGASVRQDVLGDLMSRHFIDAIIKEKINPAGAPNYVPGEYKPGEDFTYAVEFEVYPEIELKDLETIEVEKPIVEVTDADVDMMLDTLRKQQATWKEKDGAADAEDRVTIDFTGSVDGEEFEGGKASDFVLAMGQGRMIPGFEDGIKGHKAGEEFTIDVTFPEDYHAENLKGKAAKFAINLKKVEERELPELTEDFIKRFGVEDGSVEGLRAEVRKNMERELKGAVRNRVKSQAIEGLVKANDIDVPAALIDSEIDVLRRQAAQRFGGNEKQALELPRELFEEQAKRRVVVGLLLGEVIRTNELKADEERVKGLIEEMASAYEDPKEVIEFYSKNKELMDNMRNVALEEQAVEAVLAKAKVTEKETTFNELMNQQA.

Residues E161–P246 enclose the PPIase FKBP-type domain.

Belongs to the FKBP-type PPIase family. Tig subfamily. As to quaternary structure, homodimer and monomer. In vivo most of the ribosomes are in complex with monomeric TF. Uncomplexed TF, however, is in a monomer-dimer equilibrium with approximately two thirds of TF existing in a dimeric state.

Its subcellular location is the cytoplasm. The enzyme catalyses [protein]-peptidylproline (omega=180) = [protein]-peptidylproline (omega=0). In terms of biological role, involved in protein export. Acts as a chaperone by maintaining the newly synthesized protein in an open conformation. Functions as a peptidyl-prolyl cis-trans isomerase. This chain is Trigger factor, found in Escherichia fergusonii (strain ATCC 35469 / DSM 13698 / CCUG 18766 / IAM 14443 / JCM 21226 / LMG 7866 / NBRC 102419 / NCTC 12128 / CDC 0568-73).